The primary structure comprises 594 residues: Arginine--tRNA ligase (594 aa).

The 'HIGH' region motif lies at 139 to 149; that stretch reads ANPTGPLHVGH.

This sequence belongs to the class-I aminoacyl-tRNA synthetase family. Monomer.

The protein resides in the cytoplasm. The catalysed reaction is tRNA(Arg) + L-arginine + ATP = L-arginyl-tRNA(Arg) + AMP + diphosphate. The polypeptide is Arginine--tRNA ligase (Paraburkholderia phymatum (strain DSM 17167 / CIP 108236 / LMG 21445 / STM815) (Burkholderia phymatum)).